Here is a 765-residue protein sequence, read N- to C-terminus: Polyribonucleotide nucleotidyltransferase (765 aa).

Mg(2+)-binding residues include Asp556 and Asp562. Positions 622–681 constitute a KH domain; that stretch reads PRITKISIPQNKIGEVIGPKGKTINQITEETGANISIEDDGTVFVSAVGGEAAEAAIEKI. The S1 motif domain occupies 693 to 762; it reads GDRFLGTVVK…NRGKISLVPV (70 aa).

The protein belongs to the polyribonucleotide nucleotidyltransferase family. It depends on Mg(2+) as a cofactor.

The protein localises to the cytoplasm. It catalyses the reaction RNA(n+1) + phosphate = RNA(n) + a ribonucleoside 5'-diphosphate. In terms of biological role, involved in mRNA degradation. Catalyzes the phosphorolysis of single-stranded polyribonucleotides processively in the 3'- to 5'-direction. The sequence is that of Polyribonucleotide nucleotidyltransferase from Corynebacterium urealyticum (strain ATCC 43042 / DSM 7109).